The primary structure comprises 252 residues: 5'-nucleotidase SurE (252 aa).

The a divalent metal cation site is built by D8, D9, S39, and N96.

The protein belongs to the SurE nucleotidase family. A divalent metal cation serves as cofactor.

The protein localises to the cytoplasm. It carries out the reaction a ribonucleoside 5'-phosphate + H2O = a ribonucleoside + phosphate. In terms of biological role, nucleotidase that shows phosphatase activity on nucleoside 5'-monophosphates. The polypeptide is 5'-nucleotidase SurE (Petrotoga mobilis (strain DSM 10674 / SJ95)).